Reading from the N-terminus, the 546-residue chain is 6'''-hydroxyparomomycin C oxidase (546 aa).

The interval 1–30 (MERLRGPSPLENTTARHPAPLGPAHRDGLE) is disordered. H475 functions as the Proton acceptor in the catalytic mechanism.

This sequence belongs to the GMC oxidoreductase family. Requires FAD as cofactor.

It participates in antibiotic biosynthesis; lividomycin biosynthesis. Glucosaminyl-6'-oxidase involved in the biosynthetic pathway of lividomycin by mediating FAD-dependent dehydrogenation of 6'''-hydroxyparomomycin to paromomycin. The polypeptide is 6'''-hydroxyparomomycin C oxidase (livQ) (Streptomyces lividus).